We begin with the raw amino-acid sequence, 925 residues long: Protein translocase subunit SecA (925 aa).

ATP contacts are provided by residues glutamine 87, 105-109, and aspartate 515; that span reads GEGKT. Zn(2+) contacts are provided by cysteine 909, cysteine 911, cysteine 920, and histidine 921.

The protein belongs to the SecA family. In terms of assembly, monomer and homodimer. Part of the essential Sec protein translocation apparatus which comprises SecA, SecYEG and auxiliary proteins SecDF-YajC and YidC. Zn(2+) serves as cofactor.

It localises to the cell inner membrane. The protein resides in the cytoplasm. It catalyses the reaction ATP + H2O + cellular proteinSide 1 = ADP + phosphate + cellular proteinSide 2.. Part of the Sec protein translocase complex. Interacts with the SecYEG preprotein conducting channel. Has a central role in coupling the hydrolysis of ATP to the transfer of proteins into and across the cell membrane, serving both as a receptor for the preprotein-SecB complex and as an ATP-driven molecular motor driving the stepwise translocation of polypeptide chains across the membrane. The polypeptide is Protein translocase subunit SecA (Cupriavidus taiwanensis (strain DSM 17343 / BCRC 17206 / CCUG 44338 / CIP 107171 / LMG 19424 / R1) (Ralstonia taiwanensis (strain LMG 19424))).